Consider the following 457-residue polypeptide: MDTALKRSRSEEPVELPPPAREAEEKEEEEERMEQGLEEEEEVDPRIQGELEKLNQSTDDINRRETELEDARQKFRSVLVEATVKLDELAKKIGKAVEDSKPYWEARRVARQAQLEAQKATQDFQRATEVLRAAKETISLAEQRLLEDDKRQFDSAWQEMLNHATQRVMEAEQTKTRSELVHKETAARYNAAMGRMRQLEKKLKRAINKSKPYFELKAKYYVQLEQLKKTVDDLQAKLALAKGEYKAALKSLERISDEIHERRRSNAMGPRGCGVGAEGSITSVENLPASKPEPDAISVASEAFEDDNCGNLVSEDDSETQSVSSFSSGPTSPSEMPDQFPAVARPGSLDLPSPVSLSEFGMMFPILGPRSECSGASSPECEVERGDRAEGAENKMSDKANNNRVLSSTSAGGGRSRSQSSTSLEGQALETRMKQLSLQCSKGREGIIADIKTVQIG.

The segment covering 1 to 12 (MDTALKRSRSEE) has biased composition (basic and acidic residues). The segment at 1–68 (MDTALKRSRS…DDINRRETEL (68 aa)) is disordered. A compositionally biased stretch (acidic residues) spans 25 to 43 (EKEEEEERMEQGLEEEEEV). Residues 33 to 267 (MEQGLEEEEE…EIHERRRSNA (235 aa)) are sufficient for interaction with RAB11A and for guanine nucleotide exchange activity. Residues 44 to 53 (DPRIQGELEK) show a composition bias toward basic and acidic residues. Coiled-coil stretches lie at residues 46–92 (RIQG…LAKK), 99–147 (DSKP…RLLE), 156–202 (AWQE…LEKK), and 213–257 (YFEL…RISD). The span at 308–319 (NCGNLVSEDDSE) shows a compositional bias: acidic residues. The interval 308–347 (NCGNLVSEDDSETQSVSSFSSGPTSPSEMPDQFPAVARPG) is disordered. Positions 322 to 334 (SVSSFSSGPTSPS) are enriched in low complexity. Ser353 is modified (phosphoserine; by MAPK12 and MAPK9). Positions 371 to 427 (SECSGASSPECEVERGDRAEGAENKMSDKANNNRVLSSTSAGGGRSRSQSSTSLEGQ) are disordered. 2 positions are modified to phosphoserine: Ser377 and Ser378. The segment covering 382–398 (EVERGDRAEGAENKMSD) has biased composition (basic and acidic residues). Positions 406 to 427 (LSSTSAGGGRSRSQSSTSLEGQ) are enriched in low complexity. A Phosphoserine modification is found at Ser420. Phosphoserine; by MAPK12 is present on Ser423.

Belongs to the SH3BP5 family. Interacts with BTK. Interacts with all isoforms of MAPK8, MAPK9, MAPK10 and MAPK12. Interacts with GDP-bound and nucleotide-free forms of RAB11A.

Its subcellular location is the cytoplasmic vesicle membrane. The protein resides in the mitochondrion. Functions as a guanine nucleotide exchange factor (GEF) with specificity for RAB11A and RAB25. Inhibits the auto- and transphosphorylation activity of BTK. Plays a negative regulatory role in BTK-related cytoplasmic signaling in B-cells. May be involved in BCR-induced apoptotic cell death. This chain is SH3 domain-binding protein 5 (Sh3bp5), found in Rattus norvegicus (Rat).